A 35-amino-acid polypeptide reads, in one-letter code: Dermonecrotic toxin LrSicTox-alphaI-1 (35 aa).

His-11 is an active-site residue. Residue Asp-33 participates in Mg(2+) binding.

The protein belongs to the arthropod phospholipase D family. Class II subfamily. Requires Mg(2+) as cofactor. In terms of processing, contains 2 disulfide bonds. As to expression, expressed by the venom gland.

The protein resides in the secreted. It carries out the reaction an N-(acyl)-sphingosylphosphocholine = an N-(acyl)-sphingosyl-1,3-cyclic phosphate + choline. It catalyses the reaction an N-(acyl)-sphingosylphosphoethanolamine = an N-(acyl)-sphingosyl-1,3-cyclic phosphate + ethanolamine. The catalysed reaction is a 1-acyl-sn-glycero-3-phosphocholine = a 1-acyl-sn-glycero-2,3-cyclic phosphate + choline. The enzyme catalyses a 1-acyl-sn-glycero-3-phosphoethanolamine = a 1-acyl-sn-glycero-2,3-cyclic phosphate + ethanolamine. Dermonecrotic toxins cleave the phosphodiester linkage between the phosphate and headgroup of certain phospholipids (sphingolipid and lysolipid substrates), forming an alcohol (often choline) and a cyclic phosphate. This toxin acts on sphingomyelin (SM). It may also act on ceramide phosphoethanolamine (CPE), lysophosphatidylcholine (LPC) and lysophosphatidylethanolamine (LPE), but not on lysophosphatidylserine (LPS), and lysophosphatidylglycerol (LPG). It acts by transphosphatidylation, releasing exclusively cyclic phosphate products as second products. Induces dermonecrosis, hemolysis, increased vascular permeability, edema, inflammatory response, and platelet aggregation. The chain is Dermonecrotic toxin LrSicTox-alphaI-1 from Loxosceles reclusa (Brown recluse spider).